The chain runs to 474 residues: UDP-N-acetylmuramoylalanine--D-glutamate ligase (474 aa).

134-140 (GSNGKST) provides a ligand contact to ATP.

It belongs to the MurCDEF family.

Its subcellular location is the cytoplasm. The enzyme catalyses UDP-N-acetyl-alpha-D-muramoyl-L-alanine + D-glutamate + ATP = UDP-N-acetyl-alpha-D-muramoyl-L-alanyl-D-glutamate + ADP + phosphate + H(+). The protein operates within cell wall biogenesis; peptidoglycan biosynthesis. Its function is as follows. Cell wall formation. Catalyzes the addition of glutamate to the nucleotide precursor UDP-N-acetylmuramoyl-L-alanine (UMA). The sequence is that of UDP-N-acetylmuramoylalanine--D-glutamate ligase from Thiobacillus denitrificans (strain ATCC 25259 / T1).